A 1451-amino-acid chain; its full sequence is Dual 3',5'-cyclic-AMP and -GMP phosphodiesterase 11 (1451 aa).

Disordered stretches follow at residues 1-54, 75-100, 125-169, 235-262, and 327-374; these read MGQA…PQIQ, ATTP…GGYG, LPAH…QVQQ, GNDV…GATT, and QHHH…GSGG. Over residues 11–21 the composition is skewed to basic residues; that stretch reads RGCRYKNKNKS. Low complexity predominate over residues 24-45; sequence QQQQQQQQQQQQQQQHQQQQQQ. A compositionally biased stretch (polar residues) spans 77–91; the sequence is TPLQFQPTGRMNTEQ. 2 stretches are compositionally biased toward low complexity: residues 135–147 and 160–169; these read SGAA…NGSS and QQQQQYQVQQ. The segment covering 235–248 has biased composition (polar residues); it reads GNDVVSSTSPTHAN. Positions 327 to 340 are enriched in basic residues; that stretch reads QHHHNHAHLHHSQH. Positions 341–355 are enriched in low complexity; sequence SHYQAGGAVGSSSLG. Over residues 356–374 the composition is skewed to gly residues; sequence STGGASGAGGAPSLGGSGG. GAF domains lie at 419 to 572 and 604 to 754; these read EVRT…GIGL and TIEH…GMGI. The PDEase domain occupies 783-1107; sequence ATMDEAHRLR…GHWIDLADVV (325 aa). His860 acts as the Proton donor in catalysis. Residues His864, His900, Asp901, and Asp1011 each contribute to the a divalent metal cation site. Disordered regions lie at residues 1109 to 1171, 1200 to 1248, 1268 to 1305, and 1325 to 1364; these read TKTS…SNTN, DEQA…TPVS, QTSN…QELD, and INNH…IGSA. Low complexity-rich tracts occupy residues 1142–1171 and 1218–1234; these read ASEA…SNTN and CRSN…SCLS. Polar residues predominate over residues 1268 to 1277; sequence QTSNQAQTQK. The span at 1328–1355 shows a compositional bias: basic residues; that stretch reads HSHHHNHSHSHNHNHHHHHHHHSHHNHS.

This sequence belongs to the cyclic nucleotide phosphodiesterase family. A divalent metal cation serves as cofactor. As to expression, in adults, it is enriched in Malpighian tubules.

It catalyses the reaction 3',5'-cyclic GMP + H2O = GMP + H(+). The enzyme catalyses 3',5'-cyclic AMP + H2O = AMP + H(+). Functionally, plays a role in signal transduction by regulating the intracellular concentration of cyclic nucleotides cAMP and cGMP. Dual-specificity phosphodiesterase that catalyzes the hydrolysis of both cAMP and cGMP to 5'-AMP and 5'-GMP, respectively. This is Dual 3',5'-cyclic-AMP and -GMP phosphodiesterase 11 (Pde11) from Drosophila melanogaster (Fruit fly).